Reading from the N-terminus, the 127-residue chain is Small ribosomal subunit protein uS11 (127 aa).

Belongs to the universal ribosomal protein uS11 family. Part of the 30S ribosomal subunit. Interacts with proteins S7 and S18. Binds to IF-3.

Its function is as follows. Located on the platform of the 30S subunit, it bridges several disparate RNA helices of the 16S rRNA. Forms part of the Shine-Dalgarno cleft in the 70S ribosome. The sequence is that of Small ribosomal subunit protein uS11 from Streptococcus gordonii (strain Challis / ATCC 35105 / BCRC 15272 / CH1 / DL1 / V288).